A 176-amino-acid chain; its full sequence is Methylated-DNA--protein-cysteine methyltransferase (176 aa).

Residue Cys142 is the Nucleophile; methyl group acceptor of the active site.

The protein belongs to the MGMT family.

It localises to the cytoplasm. It catalyses the reaction a 6-O-methyl-2'-deoxyguanosine in DNA + L-cysteinyl-[protein] = S-methyl-L-cysteinyl-[protein] + a 2'-deoxyguanosine in DNA. The catalysed reaction is a 4-O-methyl-thymidine in DNA + L-cysteinyl-[protein] = a thymidine in DNA + S-methyl-L-cysteinyl-[protein]. Its function is as follows. Involved in the cellular defense against the biological effects of O6-methylguanine (O6-MeG) and O4-methylthymine (O4-MeT) in DNA. Repairs the methylated nucleobase in DNA by stoichiometrically transferring the methyl group to a cysteine residue in the enzyme. This is a suicide reaction: the enzyme is irreversibly inactivated. The chain is Methylated-DNA--protein-cysteine methyltransferase from Methanothermobacter thermautotrophicus (strain ATCC 29096 / DSM 1053 / JCM 10044 / NBRC 100330 / Delta H) (Methanobacterium thermoautotrophicum).